A 90-amino-acid chain; its full sequence is Putative defensin-like protein 243 (90 aa).

The first 19 residues, 1-19 (MKVEVIFLASCVLFSLIHA), serve as a signal peptide directing secretion. Disulfide bonds link C33-C88, C43-C72, C53-C82, and C70-C84.

This sequence belongs to the DEFL family.

The protein resides in the secreted. The chain is Putative defensin-like protein 243 (SCRL9) from Arabidopsis thaliana (Mouse-ear cress).